A 398-amino-acid polypeptide reads, in one-letter code: Acetate kinase (398 aa).

Position 7 (N7) interacts with Mg(2+). An ATP-binding site is contributed by K14. A substrate-binding site is contributed by R91. The active-site Proton donor/acceptor is D148. Residues 208–212 (HLGNG), 283–285 (DFR), and 331–335 (GIGEH) contribute to the ATP site. Residue E386 coordinates Mg(2+).

Belongs to the acetokinase family. In terms of assembly, homodimer. Mg(2+) serves as cofactor. Requires Mn(2+) as cofactor.

The protein resides in the cytoplasm. It carries out the reaction acetate + ATP = acetyl phosphate + ADP. It functions in the pathway metabolic intermediate biosynthesis; acetyl-CoA biosynthesis; acetyl-CoA from acetate: step 1/2. In terms of biological role, catalyzes the formation of acetyl phosphate from acetate and ATP. Can also catalyze the reverse reaction. The chain is Acetate kinase from Clostridium botulinum (strain Alaska E43 / Type E3).